Reading from the N-terminus, the 598-residue chain is Elongation factor 4 (598 aa).

A tr-type G domain is found at 4–186 (INIRNFAIIA…AIVSRLPAPS (183 aa)). Residues 16-21 (DHGKST) and 133-136 (NKID) contribute to the GTP site.

Belongs to the TRAFAC class translation factor GTPase superfamily. Classic translation factor GTPase family. LepA subfamily.

The protein resides in the cell inner membrane. The enzyme catalyses GTP + H2O = GDP + phosphate + H(+). Its function is as follows. Required for accurate and efficient protein synthesis under certain stress conditions. May act as a fidelity factor of the translation reaction, by catalyzing a one-codon backward translocation of tRNAs on improperly translocated ribosomes. Back-translocation proceeds from a post-translocation (POST) complex to a pre-translocation (PRE) complex, thus giving elongation factor G a second chance to translocate the tRNAs correctly. Binds to ribosomes in a GTP-dependent manner. The sequence is that of Elongation factor 4 from Ehrlichia ruminantium (strain Welgevonden).